An 833-amino-acid polypeptide reads, in one-letter code: DNA ligase (833 aa).

Residues 35–39, 84–85, and Glu115 contribute to the NAD(+) site; these read DVEYD and SL. Residue Lys117 is the N6-AMP-lysine intermediate of the active site. The NAD(+) site is built by Arg138, Glu175, Lys292, and Lys316. The Zn(2+) site is built by Cys410, Cys413, Cys428, and Cys434. Residues 750–833 enclose the BRCT domain; sequence VQAGPLDGQT…AFLSEHGQAV (84 aa).

The protein belongs to the NAD-dependent DNA ligase family. LigA subfamily. It depends on Mg(2+) as a cofactor. The cofactor is Mn(2+).

It catalyses the reaction NAD(+) + (deoxyribonucleotide)n-3'-hydroxyl + 5'-phospho-(deoxyribonucleotide)m = (deoxyribonucleotide)n+m + AMP + beta-nicotinamide D-nucleotide.. DNA ligase that catalyzes the formation of phosphodiester linkages between 5'-phosphoryl and 3'-hydroxyl groups in double-stranded DNA using NAD as a coenzyme and as the energy source for the reaction. It is essential for DNA replication and repair of damaged DNA. This is DNA ligase from Xanthomonas campestris pv. campestris (strain 8004).